The sequence spans 800 residues: General transcription and DNA repair factor IIH helicase/translocase subunit XPB (800 aa).

A disordered region spans residues 1–27 (MSSGDSNLKRRRGGNTGQSSKSYNTWT). The span at 17-27 (GQSSKSYNTWT) shows a compositional bias: polar residues. A Helicase ATP-binding domain is found at 329–491 (MFGNGRARSG…DLNFLIGPKL (163 aa)). 342–349 (LPCGAGKS) provides a ligand contact to ATP. Positions 444-447 (DEVH) match the DEVH box motif. Residues 546–704 (RACEYLIRFH…ELPGIDQEVN (159 aa)) form the Helicase C-terminal domain. The segment at 743 to 769 (GAKKSKSSAPTVSRTTGGSTRALSGGN) is disordered. A compositionally biased stretch (polar residues) spans 749–764 (SSAPTVSRTTGGSTRA).

Belongs to the helicase family. RAD25/XPB subfamily. As to quaternary structure, component of the 7-subunit TFIIH core complex composed of XPB/repB, XPD/repD, gtf2h1, gtf2h2, gtf2h3, gtf2h4 and gtf2h5, which is active in NER. The core complex associates with the 3-subunit CDK-activating kinase (CAK) module composed of cycH/cyclin H, cdk7 and mnat1 to form the 10-subunit holoenzyme (holo-TFIIH) active in transcription.

It is found in the nucleus. The catalysed reaction is Couples ATP hydrolysis with the unwinding of duplex DNA by translocating in the 3'-5' direction.. It catalyses the reaction ATP + H2O = ADP + phosphate + H(+). Functionally, ATP-dependent 3'-5' DNA helicase/translocase; binds dsDNA rather than ssDNA, unzipping it in a translocase rather than classical helicase activity. Component of the general transcription and DNA repair factor IIH (TFIIH) core complex. When complexed to CDK-activating kinase (CAK), involved in RNA transcription by RNA polymerase II. The ATPase activity of XPB/ERCC3, but not its helicase activity, is required for DNA opening; it may wrap around the damaged DNA wedging it open, causing localized melting and twisting that allows XPD/ERCC2 helicase to anchor. The ATP-dependent helicase activity of XPB/ERCC3 may be required for promoter escape. Also involved in transcription-coupled nucleotide excision repair (NER) of damaged DNA. In NER, TFIIH acts by opening DNA around the lesion to allow the excision of the damaged oligonucleotide and its replacement by a new DNA fragment. The structure of the TFIIH transcription complex differs from the NER-TFIIH complex. This Dictyostelium discoideum (Social amoeba) protein is General transcription and DNA repair factor IIH helicase/translocase subunit XPB.